We begin with the raw amino-acid sequence, 1127 residues long: MDCDIASYHVDSFDFLVSKGCQFAAQAVPAEKFRLKNGDAVTMKFTSAQLHKPTLDTGAKLTSDTLPLLPAECRQRGLTYAGNLKVGIDVHVNGSRLDIIEIILGKVPIMLRSEGCHLRGMSRKELVVAGEEPIEKGGYFIVNGSEKVIRLLIANRRNFPIAIIRKTFKEKGKLFSEFGVMMRSVKENHTAVMMTLHYLDTGTMQLALQFRREIFYVPLMYIVKALTDKNDAVISAGFKRGRNQDQFYSSCILNMLAQCQEEEILNQEAAIRAIGSRFRVAVSDRVAPWEDDLEAGRFIIRECVLIHLDSDEEKFHTLAYMTQKLIALVKGECAPETPDNPQFQEASVSGHILLLILRERMENIIGMVRRKLEYMSSRKDFILTSAAILKALGNHTGGEITRGMAYFLATGNLVTRVGLALQQESGFSVIAERINQLRFVSHFRAIHRGAFFMEMRTTDVRKLRPEAWGFICPVHTPDGAPCGLLNHVTASCRIVTDLSDNSNVPSLLAELGMYTHKTVALAPPGEELYPVLMNGRFLGYVPITKAASIERYLRCAKVAKDARIPYTSEIALVRRSTDIKNIQTQYPGIYILSDAGRLIRPVRNLAMDAVEHIGTFEQVYLSVVLDPEEAEPGVTMHQELHPSCLFSFAGNLIPFPDHNQSPRNVYQCQMGKQTMGTAVHAWHSRADNKMYRLQFPQQPMLKLEAYEKYEMDEYPLGTNACVAVISYTGYDMEDAMTINKASYQRGFAHGTVIKVERINLVTERERKTIFYRNPREEIKTVGPDGLPIPGRRYFLDEVYYVTFNMETGDFRTHKFHYAEPAYCGLVRIVEQGEGDSGAKHALIQWRIERNPIIGDKFASRHGQKGINSFLWPVESLPFSETGMVPDIIFNPHGFPSRMTIGMMIESMAGKAAATHGENYDASPFVFNEDNTAINHFGELLTKAGYNYYGNETFYSGVDGRQMEMQIFFGIVYYQRLRHMIADKFQVRATGPIDPITHQPVKGRKKGGGIRFGEMERDAIIAHGTSFVLQDRLLNCSDRDVAYACRRCGSLLSVLMSSRAGSHLLKKKRKDDEPLDYTETQRCRTCDKDDQVFLLQVPRVFRYLTAELAAMNVKIKLGIEHPSKVTGS.

Position 1025 is a phosphoserine (Ser1025).

This sequence belongs to the RNA polymerase beta chain family. Component of the RNA polymerase I (Pol I) complex consisting of at least 13 subunits.

The protein resides in the nucleus. The protein localises to the nucleolus. The catalysed reaction is RNA(n) + a ribonucleoside 5'-triphosphate = RNA(n+1) + diphosphate. With respect to regulation, antisense ribosomal siRNAs silence rRNA expression during the elongation phase by decreasing rpoa-2 occupancy downstream of the RNAi-targeted region in nrde-2-dependent manner. In terms of biological role, DNA-dependent RNA polymerase catalyzes the transcription of DNA into RNA using the four ribonucleoside triphosphates as substrates. Second largest core component of RNA polymerase I which synthesizes ribosomal RNA precursors. Proposed to contribute to the polymerase catalytic activity and forms the polymerase active center together with the largest subunit. Pol I is composed of mobile elements and RPA2 is part of the core element with the central large cleft and probably a clamp element that moves to open and close the cleft. Specifically binds to 18S, 5.8S and 26S rDNA, but not to 5S rDNA. The protein is DNA-directed RNA polymerase I subunit RPA2 homolog of Caenorhabditis elegans.